The following is a 369-amino-acid chain: MSGNTLGLLFTVTTFGESHGPAIGAVVDGCPPGMALTEADIQGDLDRRRPGTSRHVTQRQEPDQVEILSGVFEGKTTGTPICLLIRNTDQRSKDYGNIVETFRPGHADYTYWQKYGIRDHRGGGRSSARLTAPVVAAGAVAKKWLREKYGTEIRGYMSQLGEIAVPFTDWSHVPENPFFAPNADIIPELETYMDALRRDGDSVGARIEVVASNVPVGLGEPLFDRLDADIAHAMMGINAVKGVEIGAGFDSVAQRGSVHGDELTAEGFRTNNSGGVLGGISTGQDVTVSLAIKPTSSIRTPRESIDKAGNAATVETFGRHDPCVGIRATPIAEAMLALVLIDHALRHRAQCGDVKVDTPRIPAQAGQTP.

NADP(+) contacts are provided by R48 and R54. FMN is bound by residues 125-127 (RSS), 238-239 (NA), G278, 293-297 (KPTSS), and R319.

This sequence belongs to the chorismate synthase family. Homotetramer. The cofactor is FMNH2.

The catalysed reaction is 5-O-(1-carboxyvinyl)-3-phosphoshikimate = chorismate + phosphate. The protein operates within metabolic intermediate biosynthesis; chorismate biosynthesis; chorismate from D-erythrose 4-phosphate and phosphoenolpyruvate: step 7/7. Its function is as follows. Catalyzes the anti-1,4-elimination of the C-3 phosphate and the C-6 proR hydrogen from 5-enolpyruvylshikimate-3-phosphate (EPSP) to yield chorismate, which is the branch point compound that serves as the starting substrate for the three terminal pathways of aromatic amino acid biosynthesis. This reaction introduces a second double bond into the aromatic ring system. The polypeptide is Chorismate synthase (Cupriavidus necator (strain ATCC 17699 / DSM 428 / KCTC 22496 / NCIMB 10442 / H16 / Stanier 337) (Ralstonia eutropha)).